The sequence spans 166 residues: Large ribosomal subunit protein uL10 (166 aa).

It belongs to the universal ribosomal protein uL10 family. As to quaternary structure, part of the ribosomal stalk of the 50S ribosomal subunit. The N-terminus interacts with L11 and the large rRNA to form the base of the stalk. The C-terminus forms an elongated spine to which L12 dimers bind in a sequential fashion forming a multimeric L10(L12)X complex.

Its function is as follows. Forms part of the ribosomal stalk, playing a central role in the interaction of the ribosome with GTP-bound translation factors. This chain is Large ribosomal subunit protein uL10, found in Mesoplasma florum (strain ATCC 33453 / NBRC 100688 / NCTC 11704 / L1) (Acholeplasma florum).